A 524-amino-acid polypeptide reads, in one-letter code: Bifunctional purine biosynthesis protein PurH (524 aa).

In terms of domain architecture, MGS-like spans 1–144; the sequence is MTRRALVSVS…KNSAHVGVVV (144 aa).

The protein belongs to the PurH family.

It carries out the reaction (6R)-10-formyltetrahydrofolate + 5-amino-1-(5-phospho-beta-D-ribosyl)imidazole-4-carboxamide = 5-formamido-1-(5-phospho-D-ribosyl)imidazole-4-carboxamide + (6S)-5,6,7,8-tetrahydrofolate. The catalysed reaction is IMP + H2O = 5-formamido-1-(5-phospho-D-ribosyl)imidazole-4-carboxamide. The protein operates within purine metabolism; IMP biosynthesis via de novo pathway; 5-formamido-1-(5-phospho-D-ribosyl)imidazole-4-carboxamide from 5-amino-1-(5-phospho-D-ribosyl)imidazole-4-carboxamide (10-formyl THF route): step 1/1. It functions in the pathway purine metabolism; IMP biosynthesis via de novo pathway; IMP from 5-formamido-1-(5-phospho-D-ribosyl)imidazole-4-carboxamide: step 1/1. This Anaeromyxobacter dehalogenans (strain 2CP-1 / ATCC BAA-258) protein is Bifunctional purine biosynthesis protein PurH.